The sequence spans 173 residues: Zinc resistance-associated protein homolog (173 aa).

The first 28 residues, 1–28 (MNSKRIALGIIALATVVSLGTAANNAFA), serve as a signal peptide directing secretion.

Belongs to the ZraP family.

The protein is Zinc resistance-associated protein homolog of Nitratidesulfovibrio vulgaris (strain ATCC 29579 / DSM 644 / CCUG 34227 / NCIMB 8303 / VKM B-1760 / Hildenborough) (Desulfovibrio vulgaris).